The primary structure comprises 139 residues: Peptide methionine sulfoxide reductase MsrB (139 aa).

A MsrB domain is found at 9–131; that stretch reads TPSDNTEMTE…NSASLSFIDD (123 aa). Residues Cys-48, Cys-51, Cys-97, and Cys-100 each coordinate Zn(2+). The active-site Nucleophile is Cys-120.

This sequence belongs to the MsrB Met sulfoxide reductase family. It depends on Zn(2+) as a cofactor.

It carries out the reaction L-methionyl-[protein] + [thioredoxin]-disulfide + H2O = L-methionyl-(R)-S-oxide-[protein] + [thioredoxin]-dithiol. This chain is Peptide methionine sulfoxide reductase MsrB, found in Pectobacterium atrosepticum (strain SCRI 1043 / ATCC BAA-672) (Erwinia carotovora subsp. atroseptica).